The sequence spans 410 residues: Argininosuccinate synthase (410 aa).

Residues Ala-13–Ser-21 and Ala-40 each bind ATP. L-citrulline contacts are provided by Tyr-91 and Ser-96. An ATP-binding site is contributed by Gly-121. The L-aspartate site is built by Thr-123, Asn-127, and Asp-128. L-citrulline is bound at residue Asn-127. L-citrulline is bound by residues Arg-131, Ser-182, Ser-191, Glu-267, and Tyr-279.

This sequence belongs to the argininosuccinate synthase family. Type 1 subfamily. As to quaternary structure, homotetramer.

The protein resides in the cytoplasm. The catalysed reaction is L-citrulline + L-aspartate + ATP = 2-(N(omega)-L-arginino)succinate + AMP + diphosphate + H(+). The protein operates within amino-acid biosynthesis; L-arginine biosynthesis; L-arginine from L-ornithine and carbamoyl phosphate: step 2/3. This chain is Argininosuccinate synthase, found in Gluconobacter oxydans (strain 621H) (Gluconobacter suboxydans).